Reading from the N-terminus, the 133-residue chain is UPF0102 protein Plav_3586 (133 aa).

The protein belongs to the UPF0102 family.

The protein is UPF0102 protein Plav_3586 of Parvibaculum lavamentivorans (strain DS-1 / DSM 13023 / NCIMB 13966).